The chain runs to 615 residues: 1-deoxy-D-xylulose-5-phosphate synthase (615 aa).

Residues His-76 and Gly-117–Ser-119 each bind thiamine diphosphate. Asp-148 serves as a coordination point for Mg(2+). Residues Gly-149 to Ala-150, Asn-177, Tyr-284, and Glu-365 contribute to the thiamine diphosphate site. Asn-177 lines the Mg(2+) pocket.

This sequence belongs to the transketolase family. DXPS subfamily. As to quaternary structure, homodimer. Mg(2+) serves as cofactor. Requires thiamine diphosphate as cofactor.

The enzyme catalyses D-glyceraldehyde 3-phosphate + pyruvate + H(+) = 1-deoxy-D-xylulose 5-phosphate + CO2. Its pathway is metabolic intermediate biosynthesis; 1-deoxy-D-xylulose 5-phosphate biosynthesis; 1-deoxy-D-xylulose 5-phosphate from D-glyceraldehyde 3-phosphate and pyruvate: step 1/1. In terms of biological role, catalyzes the acyloin condensation reaction between C atoms 2 and 3 of pyruvate and glyceraldehyde 3-phosphate to yield 1-deoxy-D-xylulose-5-phosphate (DXP). This chain is 1-deoxy-D-xylulose-5-phosphate synthase, found in Francisella tularensis subsp. holarctica (strain FTNF002-00 / FTA).